A 680-amino-acid chain; its full sequence is Methionine--tRNA ligase (680 aa).

The short motif at 15 to 25 (PYANGPVHIGH) is the 'HIGH' region element. Zn(2+) is bound by residues Cys147, Cys150, Cys160, and Cys163. The 'KMSKS' region motif lies at 332–336 (KISTS). An ATP-binding site is contributed by Thr335. One can recognise a tRNA-binding domain in the interval 579-680 (DFLKLDIRVG…AEVAAGSQVK (102 aa)).

This sequence belongs to the class-I aminoacyl-tRNA synthetase family. MetG type 1 subfamily. In terms of assembly, homodimer. Zn(2+) is required as a cofactor.

It is found in the cytoplasm. The enzyme catalyses tRNA(Met) + L-methionine + ATP = L-methionyl-tRNA(Met) + AMP + diphosphate. Functionally, is required not only for elongation of protein synthesis but also for the initiation of all mRNA translation through initiator tRNA(fMet) aminoacylation. This Porphyromonas gingivalis (strain ATCC BAA-308 / W83) protein is Methionine--tRNA ligase.